The following is a 61-amino-acid chain: Small ribosomal subunit protein uS14C (61 aa).

The Zn(2+) site is built by Cys-24, Cys-27, Cys-40, and Cys-43.

It belongs to the universal ribosomal protein uS14 family. Zinc-binding uS14 subfamily. As to quaternary structure, part of the 30S ribosomal subunit. Contacts proteins S3 and S10. Zn(2+) serves as cofactor.

Binds 16S rRNA, required for the assembly of 30S particles and may also be responsible for determining the conformation of the 16S rRNA at the A site. The sequence is that of Small ribosomal subunit protein uS14C from Enterococcus faecalis (strain ATCC 700802 / V583).